Here is a 574-residue protein sequence, read N- to C-terminus: Lysyl oxidase homolog 1 (574 aa).

Residues 1-25 form the signal peptide; that stretch reads MALARGSRQLGALVWGACLCVLVHG. Positions 26-95 are excised as a propeptide; it reads QQAQPGQGSD…RRSHGSPRRR (70 aa). Disordered stretches follow at residues 62-123 and 239-374; these read VPAG…GFGQ and GGEE…DLVP. Positions 86 to 96 are enriched in basic residues; it reads RRSHGSPRRRQ. Pro residues-rich tracts occupy residues 255 to 268 and 313 to 332; these read PERPYVPPPPPPPD and YANPPPEAYGPPRALEPPYL. Residues 311-369 form an interaction with FBLN5 region; it reads PPYANPPPEAYGPPRALEPPYLPVRSSDTPPPGGERNGAQQGRLSVGSVYRPNQNGRGL. A lysyl-oxidase like region spans residues 370 to 574; that stretch reads PDLVPDPNYV…SATNCKIVQS (205 aa). Cystine bridges form between C395–C401, C448–C497, C481–C487, C508–C518, and C555–C569. Residues H449, H451, and H453 each coordinate Cu cation. Residues 477-512 constitute a cross-link (lysine tyrosylquinone (Lys-Tyr); alternate); it reads KASFCLEDSTCDFGNLKRYACTSHTQGLSPGCYDTY. Y512 is subject to 2',4',5'-topaquinone; alternate.

Belongs to the lysyl oxidase family. As to quaternary structure, interacts (via propeptide) with EFEMP2. Interacts with FBLN5. Cu cation is required as a cofactor. Requires lysine tyrosylquinone residue as cofactor. The lysine tyrosylquinone cross-link (LTQ) is generated by condensation of the epsilon-amino group of a lysine with a topaquinone produced by oxidation of tyrosine. In terms of processing, proteolytic processing by a furin-like protease causes removal of N-terminal propeptide resulting in an enzyme largely inactive, but further proteolytic processing by BMP1 results in enzyme activation. As to expression, expressed in ocular tissues including the iris, ciliary body, lens and optic nerve. Not detected in the retina.

It is found in the secreted. The protein localises to the extracellular space. The protein resides in the extracellular matrix. It carries out the reaction L-lysyl-[protein] + O2 + H2O = (S)-2-amino-6-oxohexanoyl-[protein] + H2O2 + NH4(+). In terms of biological role, catalyzes the oxidative deamination of lysine and hydroxylysine residues in collagen and elastin, resulting in the formation of covalent cross-linkages, and the stabilization of collagen and elastin fibers. Essential for the elastic fiber homeostasis and for their maintenance at adult age. The protein is Lysyl oxidase homolog 1 (LOXL1) of Homo sapiens (Human).